A 216-amino-acid chain; its full sequence is Somatotropin (216 aa).

An N-terminal signal peptide occupies residues 1 to 26 (MAAGPRTSMLLAFALLCLPWTQEVGA). Residue His-45 coordinates Zn(2+). An intrachain disulfide couples Cys-78 to Cys-189. Residue Ser-131 is modified to Phosphoserine. Glu-198 provides a ligand contact to Zn(2+). Cys-206 and Cys-214 are joined by a disulfide.

This sequence belongs to the somatotropin/prolactin family.

The protein resides in the secreted. In terms of biological role, plays an important role in growth control. Its major role in stimulating body growth is to stimulate the liver and other tissues to secrete IGF1. It stimulates both the differentiation and proliferation of myoblasts. It also stimulates amino acid uptake and protein synthesis in muscle and other tissues. This chain is Somatotropin (GH1), found in Delphinus delphis (Short-beaked common dolphin).